The following is a 547-amino-acid chain: Probable bifunctional tRNA threonylcarbamoyladenosine biosynthesis protein (547 aa).

The interval methionine 1–tryptophan 329 is kae1. Fe cation contacts are provided by histidine 112, histidine 116, and tyrosine 133. L-threonylcarbamoyladenylate is bound by residues tyrosine 133–glycine 137, aspartate 165, glycine 178, glutamate 182, and asparagine 262. Aspartate 290 provides a ligand contact to Fe cation. One can recognise a Protein kinase domain in the interval glutamine 346–leucine 547. Residues isoleucine 352–isoleucine 360 and lysine 373 each bind ATP. Catalysis depends on aspartate 465, which acts as the Proton acceptor; for kinase activity.

It in the N-terminal section; belongs to the KAE1 / TsaD family. The protein in the C-terminal section; belongs to the protein kinase superfamily. Tyr protein kinase family. BUD32 subfamily. Component of the KEOPS complex that consists of Kae1, Bud32, Cgi121 and Pcc1; the whole complex dimerizes. It depends on Fe(2+) as a cofactor.

The protein resides in the cytoplasm. It catalyses the reaction L-seryl-[protein] + ATP = O-phospho-L-seryl-[protein] + ADP + H(+). It carries out the reaction L-threonyl-[protein] + ATP = O-phospho-L-threonyl-[protein] + ADP + H(+). The enzyme catalyses L-threonylcarbamoyladenylate + adenosine(37) in tRNA = N(6)-L-threonylcarbamoyladenosine(37) in tRNA + AMP + H(+). In terms of biological role, required for the formation of a threonylcarbamoyl group on adenosine at position 37 (t(6)A37) in tRNAs that read codons beginning with adenine. Is a component of the KEOPS complex that is probably involved in the transfer of the threonylcarbamoyl moiety of threonylcarbamoyl-AMP (TC-AMP) to the N6 group of A37. The Kae1 domain likely plays a direct catalytic role in this reaction. The Bud32 domain probably displays kinase activity that regulates Kae1 function. This chain is Probable bifunctional tRNA threonylcarbamoyladenosine biosynthesis protein, found in Methanococcus vannielii (strain ATCC 35089 / DSM 1224 / JCM 13029 / OCM 148 / SB).